We begin with the raw amino-acid sequence, 365 residues long: Putative nudix hydrolase 1 (365 aa).

A Nudix hydrolase domain is found at 72–201 (VNYVAAAIIL…DFIRLVDEAV (130 aa)). The Nudix box motif lies at 109–130 (GRVEAGETIEEAVVREVKEETG). Positions 124 and 128 each coordinate Mg(2+).

It belongs to the Nudix hydrolase family. The cofactor is Mg(2+). Mn(2+) is required as a cofactor.

Probably mediates the hydrolysis of some nucleoside diphosphate derivatives. In Caenorhabditis elegans, this protein is Putative nudix hydrolase 1 (ndx-1).